A 252-amino-acid chain; its full sequence is Probable ABC transporter ATP-binding protein p29 (252 aa).

The 245-residue stretch at 8-252 folds into the ABC transporter domain; the sequence is LEIKNLTFKN…NILDQVFKND (245 aa). 42 to 49 contributes to the ATP binding site; that stretch reads GSSGQGKS.

This sequence belongs to the ABC transporter superfamily.

Part of a high-affinity transport system. The protein is Probable ABC transporter ATP-binding protein p29 of Mesomycoplasma hyorhinis (Mycoplasma hyorhinis).